Reading from the N-terminus, the 161-residue chain is Transcriptional repressor NrdR (161 aa).

The segment covering 1–11 (MRCPSCSSLDT) has biased composition (polar residues). The interval 1–20 (MRCPSCSSLDTQVKDSRPTE) is disordered. The segment at 3-34 (CPSCSSLDTQVKDSRPTEDSAVIRRRRVCMAC) is a zinc-finger region. Positions 49–139 (LTVIKRNGRR…VYRNFREAKD (91 aa)) constitute an ATP-cone domain.

This sequence belongs to the NrdR family. Requires Zn(2+) as cofactor.

In terms of biological role, negatively regulates transcription of bacterial ribonucleotide reductase nrd genes and operons by binding to NrdR-boxes. The protein is Transcriptional repressor NrdR of Rhodopseudomonas palustris (strain BisB18).